Consider the following 232-residue polypeptide: Phosphoribosylformylglycinamidine synthase subunit PurQ (232 aa).

One can recognise a Glutamine amidotransferase type-1 domain in the interval 2–232; it reads KIAIIQFGGT…SMADYITENF (231 aa). The active-site Nucleophile is the C86. Residues H203 and E205 contribute to the active site.

As to quaternary structure, part of the FGAM synthase complex composed of 1 PurL, 1 PurQ and 2 PurS subunits.

It is found in the cytoplasm. It carries out the reaction N(2)-formyl-N(1)-(5-phospho-beta-D-ribosyl)glycinamide + L-glutamine + ATP + H2O = 2-formamido-N(1)-(5-O-phospho-beta-D-ribosyl)acetamidine + L-glutamate + ADP + phosphate + H(+). The enzyme catalyses L-glutamine + H2O = L-glutamate + NH4(+). The protein operates within purine metabolism; IMP biosynthesis via de novo pathway; 5-amino-1-(5-phospho-D-ribosyl)imidazole from N(2)-formyl-N(1)-(5-phospho-D-ribosyl)glycinamide: step 1/2. Part of the phosphoribosylformylglycinamidine synthase complex involved in the purines biosynthetic pathway. Catalyzes the ATP-dependent conversion of formylglycinamide ribonucleotide (FGAR) and glutamine to yield formylglycinamidine ribonucleotide (FGAM) and glutamate. The FGAM synthase complex is composed of three subunits. PurQ produces an ammonia molecule by converting glutamine to glutamate. PurL transfers the ammonia molecule to FGAR to form FGAM in an ATP-dependent manner. PurS interacts with PurQ and PurL and is thought to assist in the transfer of the ammonia molecule from PurQ to PurL. This Methanosarcina mazei (strain ATCC BAA-159 / DSM 3647 / Goe1 / Go1 / JCM 11833 / OCM 88) (Methanosarcina frisia) protein is Phosphoribosylformylglycinamidine synthase subunit PurQ.